The following is a 507-amino-acid chain: Fluoroacetaldehyde dehydrogenase (507 aa).

Residue 219–225 coordinates NAD(+); that stretch reads GFGIEAG. Catalysis depends on residues Glu263 and Cys302.

The protein belongs to the aldehyde dehydrogenase family. In terms of assembly, homotetramer.

It carries out the reaction fluoroacetaldehyde + NAD(+) + H2O = fluoroacetate + NADH + 2 H(+). Catalyzes the oxidation of fluoroacetaldehyde to fluoroacetate. Has high affinity for fluoroacetate and glycolaldehyde but not for acetaldehyde. The protein is Fluoroacetaldehyde dehydrogenase of Streptantibioticus cattleyicolor (strain ATCC 35852 / DSM 46488 / JCM 4925 / NBRC 14057 / NRRL 8057) (Streptomyces cattleya).